A 325-amino-acid chain; its full sequence is Glutarate 2-hydroxylase (325 aa).

Fe cation-binding residues include histidine 160, aspartate 162, and histidine 292.

The protein belongs to the glutarate hydroxylase family. As to quaternary structure, homotetramer. Requires Fe(2+) as cofactor.

The enzyme catalyses glutarate + 2-oxoglutarate + O2 = (S)-2-hydroxyglutarate + succinate + CO2. It functions in the pathway amino-acid degradation. Its function is as follows. Acts as an alpha-ketoglutarate-dependent dioxygenase catalyzing hydroxylation of glutarate (GA) to L-2-hydroxyglutarate (L2HG). Functions in a L-lysine degradation pathway that proceeds via cadaverine, glutarate and L-2-hydroxyglutarate. This is Glutarate 2-hydroxylase from Escherichia coli O17:K52:H18 (strain UMN026 / ExPEC).